Reading from the N-terminus, the 248-residue chain is 3-deoxy-manno-octulosonate cytidylyltransferase (248 aa).

The protein belongs to the KdsB family.

The protein resides in the cytoplasm. It carries out the reaction 3-deoxy-alpha-D-manno-oct-2-ulosonate + CTP = CMP-3-deoxy-beta-D-manno-octulosonate + diphosphate. Its pathway is nucleotide-sugar biosynthesis; CMP-3-deoxy-D-manno-octulosonate biosynthesis; CMP-3-deoxy-D-manno-octulosonate from 3-deoxy-D-manno-octulosonate and CTP: step 1/1. It functions in the pathway bacterial outer membrane biogenesis; lipopolysaccharide biosynthesis. Its function is as follows. Activates KDO (a required 8-carbon sugar) for incorporation into bacterial lipopolysaccharide in Gram-negative bacteria. The chain is 3-deoxy-manno-octulosonate cytidylyltransferase from Shigella boydii serotype 18 (strain CDC 3083-94 / BS512).